We begin with the raw amino-acid sequence, 73 residues long: Gas vesicle protein A (73 aa).

This sequence belongs to the gas vesicle GvpA family. The gas vesicle shell is 2 nm thick and consists of a single layer of this protein. It forms helical ribs nearly perpendicular to the long axis of the vesicle.

It is found in the gas vesicle shell. Its function is as follows. Gas vesicles are hollow, gas filled proteinaceous nanostructures found in some microorganisms. During planktonic growth they allow positioning of the organism at a favorable depth for light or nutrient acquisition. GvpA forms the protein shell. This chain is Gas vesicle protein A, found in Nostoc punctiforme (strain ATCC 29133 / PCC 73102).